Reading from the N-terminus, the 690-residue chain is Elongation factor G (690 aa).

In terms of domain architecture, tr-type G spans Glu-8–Leu-282. GTP is bound by residues Ala-17–Thr-24, Asp-81–His-85, and Asn-135–Asp-138.

The protein belongs to the TRAFAC class translation factor GTPase superfamily. Classic translation factor GTPase family. EF-G/EF-2 subfamily.

It is found in the cytoplasm. In terms of biological role, catalyzes the GTP-dependent ribosomal translocation step during translation elongation. During this step, the ribosome changes from the pre-translocational (PRE) to the post-translocational (POST) state as the newly formed A-site-bound peptidyl-tRNA and P-site-bound deacylated tRNA move to the P and E sites, respectively. Catalyzes the coordinated movement of the two tRNA molecules, the mRNA and conformational changes in the ribosome. The polypeptide is Elongation factor G (Alkaliphilus oremlandii (strain OhILAs) (Clostridium oremlandii (strain OhILAs))).